The sequence spans 91 residues: Small ribosomal subunit protein bS16 (91 aa).

This sequence belongs to the bacterial ribosomal protein bS16 family.

The chain is Small ribosomal subunit protein bS16 from Exiguobacterium sibiricum (strain DSM 17290 / CCUG 55495 / CIP 109462 / JCM 13490 / 255-15).